Consider the following 700-residue polypeptide: Elongation factor G (700 aa).

Positions 10–285 constitute a tr-type G domain; the sequence is DRTRNIGIMA…AVIDYLPSPL (276 aa). Residues 19-26, 83-87, and 137-140 each bind GTP; these read AHIDAGKT, DTPGH, and NKMD.

The protein belongs to the TRAFAC class translation factor GTPase superfamily. Classic translation factor GTPase family. EF-G/EF-2 subfamily.

It is found in the cytoplasm. Catalyzes the GTP-dependent ribosomal translocation step during translation elongation. During this step, the ribosome changes from the pre-translocational (PRE) to the post-translocational (POST) state as the newly formed A-site-bound peptidyl-tRNA and P-site-bound deacylated tRNA move to the P and E sites, respectively. Catalyzes the coordinated movement of the two tRNA molecules, the mRNA and conformational changes in the ribosome. In Lacticaseibacillus casei (strain BL23) (Lactobacillus casei), this protein is Elongation factor G.